A 530-amino-acid polypeptide reads, in one-letter code: Apolipoprotein N-acyltransferase (530 aa).

Helical transmembrane passes span 19–39, 65–85, 96–116, 128–148, 169–189, and 197–217; these read LIAG…PGLL, WLAG…AFLV, FAVT…ALLY, LTFA…LTGF, LVGA…PAVW, and AATG…AIAL. The 254-residue stretch at 232-485 folds into the CN hydrolase domain; the sequence is VQADIKQDLK…SGVIDAQIPG (254 aa). Glutamate 274 functions as the Proton acceptor in the catalytic mechanism. Residue lysine 343 is part of the active site. The active-site Nucleophile is the cysteine 396.

It belongs to the CN hydrolase family. Apolipoprotein N-acyltransferase subfamily.

Its subcellular location is the cell inner membrane. The enzyme catalyses N-terminal S-1,2-diacyl-sn-glyceryl-L-cysteinyl-[lipoprotein] + a glycerophospholipid = N-acyl-S-1,2-diacyl-sn-glyceryl-L-cysteinyl-[lipoprotein] + a 2-acyl-sn-glycero-3-phospholipid + H(+). It functions in the pathway protein modification; lipoprotein biosynthesis (N-acyl transfer). Catalyzes the phospholipid dependent N-acylation of the N-terminal cysteine of apolipoprotein, the last step in lipoprotein maturation. The sequence is that of Apolipoprotein N-acyltransferase from Caulobacter vibrioides (strain ATCC 19089 / CIP 103742 / CB 15) (Caulobacter crescentus).